A 488-amino-acid chain; its full sequence is Kelch-like protein 15 (488 aa).

Positions 31 to 98 (LDVTLVIEDH…MYYGTIELSM (68 aa)) constitute a BTB domain. The BACK domain occupies 133 to 237 (CAEIMRLLDD…TPSSVFEKVK (105 aa)). Kelch repeat units lie at residues 328-379 (FVFL…VIGR), 381-426 (VYAV…VLGN), and 428-473 (LYIT…NKCK).

As to quaternary structure, homodimer. Interacts with CUL3.

It localises to the nucleus. The protein operates within protein modification; protein ubiquitination. Its function is as follows. Substrate-specific adapter for CUL3 E3 ubiquitin-protein ligase complex. The polypeptide is Kelch-like protein 15 (KLHL15) (Gallus gallus (Chicken)).